Consider the following 236-residue polypeptide: Phosphatidylserine decarboxylase proenzyme (236 aa).

S203 functions as the Schiff-base intermediate with substrate; via pyruvic acid in the catalytic mechanism. S203 carries the post-translational modification Pyruvic acid (Ser); by autocatalysis.

Belongs to the phosphatidylserine decarboxylase family. PSD-A subfamily. In terms of assembly, heterodimer of a large membrane-associated beta subunit and a small pyruvoyl-containing alpha subunit. Requires pyruvate as cofactor. In terms of processing, is synthesized initially as an inactive proenzyme. Formation of the active enzyme involves a self-maturation process in which the active site pyruvoyl group is generated from an internal serine residue via an autocatalytic post-translational modification. Two non-identical subunits are generated from the proenzyme in this reaction, and the pyruvate is formed at the N-terminus of the alpha chain, which is derived from the carboxyl end of the proenzyme. The post-translation cleavage follows an unusual pathway, termed non-hydrolytic serinolysis, in which the side chain hydroxyl group of the serine supplies its oxygen atom to form the C-terminus of the beta chain, while the remainder of the serine residue undergoes an oxidative deamination to produce ammonia and the pyruvoyl prosthetic group on the alpha chain.

It localises to the cell membrane. The enzyme catalyses a 1,2-diacyl-sn-glycero-3-phospho-L-serine + H(+) = a 1,2-diacyl-sn-glycero-3-phosphoethanolamine + CO2. It participates in phospholipid metabolism; phosphatidylethanolamine biosynthesis; phosphatidylethanolamine from CDP-diacylglycerol: step 2/2. Catalyzes the formation of phosphatidylethanolamine (PtdEtn) from phosphatidylserine (PtdSer). This chain is Phosphatidylserine decarboxylase proenzyme, found in Saccharopolyspora erythraea (strain ATCC 11635 / DSM 40517 / JCM 4748 / NBRC 13426 / NCIMB 8594 / NRRL 2338).